Reading from the N-terminus, the 307-residue chain is Acyl transferase (307 aa).

Active-site charge relay system residues include Ser116, Asp213, and His243.

This sequence belongs to the LuxD family.

Its pathway is lipid metabolism; fatty acid reduction for biolumincescence. In terms of biological role, acyl transferase is part of the fatty acid reductase system required for aldehyde biosynthesis; it produces fatty acids for the luminescent reaction. This is Acyl transferase from Photorhabdus laumondii subsp. laumondii (strain DSM 15139 / CIP 105565 / TT01) (Photorhabdus luminescens subsp. laumondii).